The chain runs to 277 residues: S-formylglutathione hydrolase FrmB (277 aa).

Residues Ser145, Asp221, and His254 each act as charge relay system in the active site.

Belongs to the esterase D family.

The catalysed reaction is S-formylglutathione + H2O = formate + glutathione + H(+). Serine hydrolase involved in the detoxification of formaldehyde. Hydrolyzes S-formylglutathione to glutathione and formate. The chain is S-formylglutathione hydrolase FrmB (frmB) from Escherichia coli O6:H1 (strain CFT073 / ATCC 700928 / UPEC).